A 413-amino-acid chain; its full sequence is Multifunctional CCA protein (413 aa).

Residues Gly8 and Arg11 each contribute to the ATP site. The CTP site is built by Gly8 and Arg11. Mg(2+) contacts are provided by Asp21 and Asp23. Residues Arg91, Arg137, and Arg140 each coordinate ATP. Positions 91, 137, and 140 each coordinate CTP. The HD domain occupies 228-329; the sequence is TGVHTLMTLS…VKLFDAIDAW (102 aa).

Belongs to the tRNA nucleotidyltransferase/poly(A) polymerase family. Bacterial CCA-adding enzyme type 1 subfamily. As to quaternary structure, monomer. Can also form homodimers and oligomers. Mg(2+) is required as a cofactor. Requires Ni(2+) as cofactor.

The enzyme catalyses a tRNA precursor + 2 CTP + ATP = a tRNA with a 3' CCA end + 3 diphosphate. The catalysed reaction is a tRNA with a 3' CCA end + 2 CTP + ATP = a tRNA with a 3' CCACCA end + 3 diphosphate. In terms of biological role, catalyzes the addition and repair of the essential 3'-terminal CCA sequence in tRNAs without using a nucleic acid template. Adds these three nucleotides in the order of C, C, and A to the tRNA nucleotide-73, using CTP and ATP as substrates and producing inorganic pyrophosphate. tRNA 3'-terminal CCA addition is required both for tRNA processing and repair. Also involved in tRNA surveillance by mediating tandem CCA addition to generate a CCACCA at the 3' terminus of unstable tRNAs. While stable tRNAs receive only 3'-terminal CCA, unstable tRNAs are marked with CCACCA and rapidly degraded. The sequence is that of Multifunctional CCA protein from Salmonella typhi.